The primary structure comprises 290 residues: Endoplasmic reticulum-Golgi intermediate compartment protein 1 (290 aa).

Topologically, residues 1 to 26 are cytoplasmic; it reads MPFDFRRFDIYRKVPKDLTQPTYTGA. Residues 27 to 47 traverse the membrane as a helical segment; it reads IISICCCLFILFLFLSELTGF. The Lumenal segment spans residues 48–254; it reads ITTEVVNELY…RRQPLYRFIT (207 aa). A glycan (N-linked (GlcNAc...) asparagine) is linked at N74. A helical transmembrane segment spans residues 255 to 275; the sequence is TICAIIGGTFTVAGILDSCIF. Residues 276-290 lie on the Cytoplasmic side of the membrane; that stretch reads TASEAWKKIQLGKMH.

This sequence belongs to the ERGIC family. In terms of assembly, may form a heteromeric complex composed of ERGIC1, ERGIC2 and ERGIC3. Within the complex, the interaction with ERGIC3 is direct. Interacts with ERGIC3/ERV46. Post-translationally, N-glycosylated.

Its subcellular location is the endoplasmic reticulum membrane. The protein resides in the endoplasmic reticulum-Golgi intermediate compartment membrane. The protein localises to the golgi apparatus membrane. In terms of biological role, possible role in transport between endoplasmic reticulum and Golgi. This chain is Endoplasmic reticulum-Golgi intermediate compartment protein 1 (ERGIC1), found in Homo sapiens (Human).